A 244-amino-acid chain; its full sequence is Coenzyme Q-binding protein COQ10 homolog B, mitochondrial (244 aa).

This sequence belongs to the COQ10 family. Interacts with coenzyme Q.

The protein localises to the mitochondrion inner membrane. Functionally, required for the function of coenzyme Q in the respiratory chain. May serve as a chaperone or may be involved in the transport of Q6 from its site of synthesis to the catalytic sites of the respiratory complexes. The protein is Coenzyme Q-binding protein COQ10 homolog B, mitochondrial (coq10b) of Xenopus laevis (African clawed frog).